Here is a 158-residue protein sequence, read N- to C-terminus: Cyclic pyranopterin monophosphate synthase (158 aa).

Substrate is bound by residues 76–78 (LCH) and 114–115 (ME). Asp-129 is a catalytic residue.

Belongs to the MoaC family. As to quaternary structure, homohexamer; trimer of dimers.

The catalysed reaction is (8S)-3',8-cyclo-7,8-dihydroguanosine 5'-triphosphate = cyclic pyranopterin phosphate + diphosphate. The protein operates within cofactor biosynthesis; molybdopterin biosynthesis. Its function is as follows. Catalyzes the conversion of (8S)-3',8-cyclo-7,8-dihydroguanosine 5'-triphosphate to cyclic pyranopterin monophosphate (cPMP). The sequence is that of Cyclic pyranopterin monophosphate synthase from Brucella anthropi (strain ATCC 49188 / DSM 6882 / CCUG 24695 / JCM 21032 / LMG 3331 / NBRC 15819 / NCTC 12168 / Alc 37) (Ochrobactrum anthropi).